A 365-amino-acid polypeptide reads, in one-letter code: Serine/threonine-protein kinase SAPK6 (365 aa).

The Protein kinase domain occupies 4–260; the sequence is YELLKDIGSG…IREIRNHPWF (257 aa). Residues 10–18 and K33 each bind ATP; that span reads IGSGNFGVA. D123 acts as the Proton acceptor in catalysis. A disordered region spans residues 298–365; it reads VQEAKTPPPS…AHASCDLQKS (68 aa). Over residues 317–347 the composition is skewed to acidic residues; sequence TEEEEQEDGKNPDDDEGDRDEEEGEEGDSED.

The protein belongs to the protein kinase superfamily. Ser/Thr protein kinase family. As to quaternary structure, interacts with BZIP46. In terms of processing, may be phosphorylated. As to expression, expressed in leaf blades and leaf sheaths. Expressed in shoots and roots of young seedlings.

It catalyses the reaction L-seryl-[protein] + ATP = O-phospho-L-seryl-[protein] + ADP + H(+). The enzyme catalyses L-threonyl-[protein] + ATP = O-phospho-L-threonyl-[protein] + ADP + H(+). Activated by hyperosmotic stress. Functionally, may play a role in signal transduction of hyperosmotic response. Can phosphorylate ABI5 in vitro. Can phosphorylate BZIP46 in vitro. The polypeptide is Serine/threonine-protein kinase SAPK6 (Oryza sativa subsp. japonica (Rice)).